The primary structure comprises 120 residues: Large ribosomal subunit protein bL19 (120 aa).

Belongs to the bacterial ribosomal protein bL19 family.

Functionally, this protein is located at the 30S-50S ribosomal subunit interface and may play a role in the structure and function of the aminoacyl-tRNA binding site. The chain is Large ribosomal subunit protein bL19 from Rippkaea orientalis (strain PCC 8801 / RF-1) (Cyanothece sp. (strain PCC 8801)).